The chain runs to 573 residues: MYDNMSTMVYIKEDKLEKLTQDEIISKTKQVIQGLEALKNEHNSILQSLLETLKCLKKDDESNLVEEKSNMIRKSLEMLELGLSEAQVMMALSNHLNAVESEKQKLRAQVRRLCQENQWLRDELANTQQKLQKSEQSVAQLEEEKKHLEFMNQLKKYDDDISPSEDKDTDSTKEPLDDLFPNDEDDPGQGIQQQHSSAAAAAQQGGYEIPARLRTLHNLVIQYASQGRYEVAVPLCKQALEDLEKTSGHDHPDVATMLNILALVYRDQNKYKDAANLLNDALAIREKTLGKDHPAVAATLNNLAVLYGKRGKYKEAEPLCKRALEIREKVLGKDHPDVAKQLNNLALLCQNQGKYEEVEYYYQRALEIYQTKLGPDDPNVAKTKNNLASCYLKQGKFKQAETLYKEILTRAHEREFGSVDDENKPIWMHAEEREECKGKQKDGTSFGEYGGWYKACKVDSPTVTTTLKNLGALYRRQGKFEAAETLEEAAMRSRKQGLDNVHKQRVAEVLNDPENMEKRRSRESLNVDVVKYESGPDGGEEVSMSVEWNGGVSGRASFCGKRQQQQWPGRRHR.

Residues 27–156 (KTKQVIQGLE…HLEFMNQLKK (130 aa)) are a coiled coil. Over residues 155–176 (KKYDDDISPSEDKDTDSTKEPL) the composition is skewed to basic and acidic residues. The tract at residues 155 to 203 (KKYDDDISPSEDKDTDSTKEPLDDLFPNDEDDPGQGIQQQHSSAAAAAQ) is disordered. Ser-162 carries the phosphoserine modification. A compositionally biased stretch (low complexity) spans 188–203 (GQGIQQQHSSAAAAAQ). TPR repeat units lie at residues 213–246 (LRTL…LEKT), 255–288 (ATML…REKT), 297–330 (AATL…REKV), 339–372 (AKQL…YQTK), and 381–414 (AKTK…AHER). Tyr-449 is modified (phosphotyrosine). Position 460 is a phosphoserine (Ser-460). Residues 464 to 497 (TTTLKNLGALYRRQGKFEAAETLEEAAMRSRKQG) form a TPR 6 repeat. Phosphoserine; by AMPK occurs at positions 521 and 524. The residue at position 547 (Glu-547) is a Phosphoserine. The interval 553 to 573 (SGRASFCGKRQQQQWPGRRHR) is disordered.

This sequence belongs to the kinesin light chain family. Oligomeric complex composed of two heavy chains and two light chains. Interacts with SPAG9. Interacts with ATCAY; may link mitochondria to KLC1 and regulate mitochondria localization into neuron projections. Interacts (via TPR repeats) with TOR1A; the interaction associates TOR1A with the kinesin oligomeric complex. Interacts with BORCS5. Interacts with MAPK8IP3/JIP3 and NTRK2/TRKB; interaction with NTRK2/TRKB is mediated by MAPK8IP3/JIP3. Interacts with CLSTN1; phosphorylation at Ser-460 inhibits interaction with CLSTN1. As to quaternary structure, (Microbial infection) Interacts with adenovirus hexon-interlacing protein; this interaction leads to capsid disruption at the nuclear pore complex during virus entry into host cell. Phosphorylation at Ser-460 by ERK inhibits interaction with CLSTN1 and localization to cytoplasmic vesicles. As to expression, found in a variety of tissues. Mostly abundant in brain and spine.

The protein resides in the cell projection. The protein localises to the growth cone. Its subcellular location is the cytoplasmic vesicle. It localises to the cytoplasm. It is found in the cytoskeleton. Its function is as follows. Kinesin is a microtubule-associated force-producing protein that may play a role in organelle transport. The light chain may function in coupling of cargo to the heavy chain or in the modulation of its ATPase activity. The protein is Kinesin light chain 1 (KLC1) of Homo sapiens (Human).